Consider the following 99-residue polypeptide: NADH-quinone oxidoreductase subunit K (99 aa).

3 helical membrane passes run 3-23 (PDNY…GVLL), 28-48 (IVVF…FVAF), and 59-79 (VVAF…LAII).

It belongs to the complex I subunit 4L family. As to quaternary structure, NDH-1 is composed of 14 different subunits. Subunits NuoA, H, J, K, L, M, N constitute the membrane sector of the complex.

Its subcellular location is the cell membrane. It catalyses the reaction a quinone + NADH + 5 H(+)(in) = a quinol + NAD(+) + 4 H(+)(out). Functionally, NDH-1 shuttles electrons from NADH, via FMN and iron-sulfur (Fe-S) centers, to quinones in the respiratory chain. The immediate electron acceptor for the enzyme in this species is believed to be a menaquinone. Couples the redox reaction to proton translocation (for every two electrons transferred, four hydrogen ions are translocated across the cytoplasmic membrane), and thus conserves the redox energy in a proton gradient. In Mycobacterium sp. (strain JLS), this protein is NADH-quinone oxidoreductase subunit K.